Consider the following 446-residue polypeptide: Tubulin beta chain (446 aa).

GTP contacts are provided by Gln-11, Glu-69, Ser-138, Gly-142, Thr-143, Gly-144, Asn-204, and Asn-226. Glu-69 contributes to the Mg(2+) binding site. A disordered region spans residues 426–446 (QDATAEEEGEYVEDEDEMDGM). The segment covering 429–446 (TAEEEGEYVEDEDEMDGM) has biased composition (acidic residues).

The protein belongs to the tubulin family. As to quaternary structure, dimer of alpha and beta chains. A typical microtubule is a hollow water-filled tube with an outer diameter of 25 nm and an inner diameter of 15 nM. Alpha-beta heterodimers associate head-to-tail to form protofilaments running lengthwise along the microtubule wall with the beta-tubulin subunit facing the microtubule plus end conferring a structural polarity. Microtubules usually have 13 protofilaments but different protofilament numbers can be found in some organisms and specialized cells. Mg(2+) is required as a cofactor.

The protein resides in the cytoplasm. It is found in the cytoskeleton. Functionally, tubulin is the major constituent of microtubules, a cylinder consisting of laterally associated linear protofilaments composed of alpha- and beta-tubulin heterodimers. Microtubules grow by the addition of GTP-tubulin dimers to the microtubule end, where a stabilizing cap forms. Below the cap, tubulin dimers are in GDP-bound state, owing to GTPase activity of alpha-tubulin. The chain is Tubulin beta chain from Euplotes crassus.